The following is a 225-amino-acid chain: UPF0758 protein BCG9842_B0662 (225 aa).

The region spanning 103 to 225 (SIRSPEDCAK…FVSLKEKGHI (123 aa)) is the MPN domain. Residues histidine 174, histidine 176, and aspartate 187 each contribute to the Zn(2+) site. The short motif at 174–187 (HNHPSGDPTPSRED) is the JAMM motif element.

Belongs to the UPF0758 family.

In Bacillus cereus (strain G9842), this protein is UPF0758 protein BCG9842_B0662.